Here is a 195-residue protein sequence, read N- to C-terminus: Holliday junction branch migration complex subunit RuvA (195 aa).

The tract at residues 1–66 (MNYLVFKVIY…LIIKDLYGFR (66 aa)) is domain I. Positions 67–141 (TYNERLLFID…KYINKVSEKN (75 aa)) are domain II. Asn-141 is a region of interest (flexible linker). The tract at residues 141-195 (NPWAKELSIGLENLGYDKKDIEYAITKVKVDTQQNIDISEIIGCAIKEISLRHEN) is domain III.

This sequence belongs to the RuvA family. Homotetramer. Forms an RuvA(8)-RuvB(12)-Holliday junction (HJ) complex. HJ DNA is sandwiched between 2 RuvA tetramers; dsDNA enters through RuvA and exits via RuvB. An RuvB hexamer assembles on each DNA strand where it exits the tetramer. Each RuvB hexamer is contacted by two RuvA subunits (via domain III) on 2 adjacent RuvB subunits; this complex drives branch migration. In the full resolvosome a probable DNA-RuvA(4)-RuvB(12)-RuvC(2) complex forms which resolves the HJ.

It localises to the cytoplasm. In terms of biological role, the RuvA-RuvB-RuvC complex processes Holliday junction (HJ) DNA during genetic recombination and DNA repair, while the RuvA-RuvB complex plays an important role in the rescue of blocked DNA replication forks via replication fork reversal (RFR). RuvA specifically binds to HJ cruciform DNA, conferring on it an open structure. The RuvB hexamer acts as an ATP-dependent pump, pulling dsDNA into and through the RuvAB complex. HJ branch migration allows RuvC to scan DNA until it finds its consensus sequence, where it cleaves and resolves the cruciform DNA. The sequence is that of Holliday junction branch migration complex subunit RuvA from Ureaplasma urealyticum serovar 10 (strain ATCC 33699 / Western).